A 318-amino-acid chain; its full sequence is 2-keto-3-deoxygluconate permease (318 aa).

The next 10 membrane-spanning stretches (helical) occupy residues 10-30 (IPGGLMLVPLFLGALCNTFTP), 42-62 (GLITGTIPILAVWFFCMGASI), 76-96 (VLVITKLATAWVVALIAGTFL), 105-125 (LLAGISVLALVAAMDMTNGGL), 139-159 (AGAFVLMSLESGPLMTMVILG), 162-182 (GIATFEPQLFVGAVLPFLIGF), 199-219 (VQTLIPFFAFALGNTINLAVI), 224-244 (FAGIFLGVLVIVVTGIPLIIA), 263-283 (AGAAVATPLLIANMAPEFAPV), and 289-309 (ALVATSVIVTSVLVPVITALW).

This sequence belongs to the KdgT transporter family.

The protein resides in the cell inner membrane. It carries out the reaction 2-dehydro-3-deoxy-D-gluconate(in) + H(+)(in) = 2-dehydro-3-deoxy-D-gluconate(out) + H(+)(out). Catalyzes the proton-dependent uptake of 2-keto-3-deoxygluconate (KDG) into the cell. In Pectobacterium carotovorum subsp. carotovorum (strain PC1), this protein is 2-keto-3-deoxygluconate permease.